The following is a 346-amino-acid chain: MTHRFLAACRREPVDRVPVWMMRQAGRYQPSYRAVRQKVSFLELCRSPELIAQVTVAPIDEFGFDAAILFSDILVHLPAMGLDLTFEKGEKGKGDGGPKIGNPVRTRADVDALRVPVPKKDLPYVLDGVRAIRTALADRVPLIGFVGGPFTVASYAVEGGSQGFTRLKTMLYAEPATAHALFEKLTQAAIVQIEEQVAAGAQAAQIFESWLGELAREDLEEFSFPYLARIAEAVRKTGVPSIIFSTGTTAHLERMAKLGYDVVSVDWRIPIDEARARLPGVAVQGNYDSTLLLGPREVAVARAQQLLRAAGPTPGYIFNLGHGIQVGTPTENVKAVVDAVHAFGWK.

Substrate contacts are provided by residues 23–27, Asp72, Tyr155, Ser209, and His322; that span reads RQAGR.

Belongs to the uroporphyrinogen decarboxylase family. In terms of assembly, homodimer.

Its subcellular location is the cytoplasm. It carries out the reaction uroporphyrinogen III + 4 H(+) = coproporphyrinogen III + 4 CO2. It participates in porphyrin-containing compound metabolism; protoporphyrin-IX biosynthesis; coproporphyrinogen-III from 5-aminolevulinate: step 4/4. In terms of biological role, catalyzes the decarboxylation of four acetate groups of uroporphyrinogen-III to yield coproporphyrinogen-III. The polypeptide is Uroporphyrinogen decarboxylase (Anaeromyxobacter dehalogenans (strain 2CP-C)).